Here is a 680-residue protein sequence, read N- to C-terminus: DNA-directed RNA polymerase subunit beta' (680 aa).

Cysteine 69, cysteine 71, cysteine 87, and cysteine 90 together coordinate Zn(2+). Positions 489, 491, and 493 each coordinate Mg(2+).

Belongs to the RNA polymerase beta' chain family. RpoC1 subfamily. As to quaternary structure, in plastids the minimal PEP RNA polymerase catalytic core is composed of four subunits: alpha, beta, beta', and beta''. When a (nuclear-encoded) sigma factor is associated with the core the holoenzyme is formed, which can initiate transcription. Requires Mg(2+) as cofactor. Zn(2+) is required as a cofactor.

The protein localises to the plastid. It localises to the chloroplast. The enzyme catalyses RNA(n) + a ribonucleoside 5'-triphosphate = RNA(n+1) + diphosphate. DNA-dependent RNA polymerase catalyzes the transcription of DNA into RNA using the four ribonucleoside triphosphates as substrates. This chain is DNA-directed RNA polymerase subunit beta', found in Nasturtium officinale (Watercress).